Consider the following 483-residue polypeptide: 3-isopropylmalate dehydratase large subunit (483 aa).

3 residues coordinate [4Fe-4S] cluster: Cys352, Cys412, and Cys415.

It belongs to the aconitase/IPM isomerase family. LeuC type 1 subfamily. In terms of assembly, heterodimer of LeuC and LeuD. Requires [4Fe-4S] cluster as cofactor.

The enzyme catalyses (2R,3S)-3-isopropylmalate = (2S)-2-isopropylmalate. The protein operates within amino-acid biosynthesis; L-leucine biosynthesis; L-leucine from 3-methyl-2-oxobutanoate: step 2/4. Functionally, catalyzes the isomerization between 2-isopropylmalate and 3-isopropylmalate, via the formation of 2-isopropylmaleate. The polypeptide is 3-isopropylmalate dehydratase large subunit (Paenarthrobacter aurescens (strain TC1)).